A 253-amino-acid chain; its full sequence is Amino-acid-binding protein AabA (253 aa).

The N-terminal stretch at 1–23 (MPFLKTLFRGALCSIACGASLFC) is a signal peptide.

This sequence belongs to the bacterial solute-binding protein 3 family.

The protein resides in the periplasm. The chain is Amino-acid-binding protein AabA (aabA) from Dichelobacter nodosus (Bacteroides nodosus).